The following is a 628-amino-acid chain: (+)-alpha-pinene synthase, chloroplastic (628 aa).

The N-terminal 48 residues, 1 to 48 (MALVSAVPLNSKLCLRRTLFGFSHELKAIHSTVPNLGMCRGGKSIAPS), are a transit peptide targeting the chloroplast. Mg(2+) contacts are provided by aspartate 379, aspartate 383, and aspartate 531. The DDXXD motif signature appears at 379 to 383 (DDIYD). Serine 539 provides a ligand contact to K(+).

Belongs to the terpene synthase family. Tpsd subfamily. Mg(2+) is required as a cofactor. It depends on Mn(2+) as a cofactor. Requires K(+) as cofactor.

The protein resides in the plastid. The protein localises to the chloroplast. It catalyses the reaction (2E)-geranyl diphosphate = (1R,5R)-alpha-pinene + diphosphate. Its pathway is terpene metabolism; oleoresin biosynthesis. Its function is as follows. Involved in defensive oleoresin formation in conifers in response to insect attack or other injury. Involved in monoterpene (C10) olefins biosynthesis. Produces mainly (+)-alpha-pinene (97%) with a small amount of (-)-alpha-pinene (3%). The protein is (+)-alpha-pinene synthase, chloroplastic (PT30) of Pinus taeda (Loblolly pine).